Here is a 320-residue protein sequence, read N- to C-terminus: Serpentine receptor class delta-28 (320 aa).

The next 7 membrane-spanning stretches (helical) occupy residues 5–25, 38–58, 83–103, 122–142, 176–196, 230–250, and 258–278; these read LLHT…MYLA, AIIT…FFVM, ACYI…IWMI, SLVF…ATWI, LTLI…YAWI, FLPS…TQLI, and LVSV…ILFV.

This sequence belongs to the nematode receptor-like protein srd family.

The protein localises to the membrane. The polypeptide is Serpentine receptor class delta-28 (srd-28) (Caenorhabditis elegans).